Consider the following 568-residue polypeptide: U6 small nuclear RNA (adenine-(43)-N(6))-methyltransferase (568 aa).

Residues 1–20 (MSEIDTNDIKKEMDNKNYRD) are disordered. The span at 7-20 (NDIKKEMDNKNYRD) shows a compositional bias: basic and acidic residues. S-adenosyl-L-methionine is bound by residues Arg117, Gly151, Asp175, and Asn250. Disordered regions lie at residues 363 to 383 (KENN…INNN), 403 to 431 (NLDS…NNNN), and 503 to 538 (DPKI…NKNN). Low complexity-rich tracts occupy residues 365-383 (NNNI…INNN), 409-431 (NNNN…NNNN), and 507-538 (NNNN…NKNN).

Belongs to the methyltransferase superfamily. METTL16/RlmF family.

It catalyses the reaction adenosine in U6 snRNA + S-adenosyl-L-methionine = N(6)-methyladenosine in U6 snRNA + S-adenosyl-L-homocysteine + H(+). Its function is as follows. RNA N6-methyltransferase that mediates N6-methylation of adenine of U6 small nuclear RNA (U6 snRNA). This Dictyostelium discoideum (Social amoeba) protein is U6 small nuclear RNA (adenine-(43)-N(6))-methyltransferase.